Reading from the N-terminus, the 389-residue chain is Transaldolase (389 aa).

The Schiff-base intermediate with substrate role is filled by lysine 136. EF-hand domains follow at residues 330 to 365 and 365 to 388; these read ALNQ…FDAI and IDLN…VSKL. Positions 343, 345, 347, 354, 366, 368, 370, 372, and 377 each coordinate Ca(2+).

It belongs to the transaldolase family. Type 1 subfamily.

The protein resides in the cytoplasm. It carries out the reaction D-sedoheptulose 7-phosphate + D-glyceraldehyde 3-phosphate = D-erythrose 4-phosphate + beta-D-fructose 6-phosphate. It participates in carbohydrate degradation; pentose phosphate pathway; D-glyceraldehyde 3-phosphate and beta-D-fructose 6-phosphate from D-ribose 5-phosphate and D-xylulose 5-phosphate (non-oxidative stage): step 2/3. Transaldolase is important for the balance of metabolites in the pentose-phosphate pathway. The polypeptide is Transaldolase (Gloeobacter violaceus (strain ATCC 29082 / PCC 7421)).